We begin with the raw amino-acid sequence, 108 residues long: MAPRTSLALFVSLNLLFFTCTSATTGTCPIQISTCANVLNLVDLTLGNPPVKPCCSLIQGLADLEAAACLCTALKASILGIVNINLPINLSVLLNVCSRNAPKGFQCA.

The first 23 residues, 1–23 (MAPRTSLALFVSLNLLFFTCTSA), serve as a signal peptide directing secretion. Cystine bridges form between C28–C55, C35–C54, and C71–C107.

Belongs to the plant LTP family. PEARLI1 subfamily.

The protein resides in the secreted. In Arabidopsis thaliana (Mouse-ear cress), this protein is Putative lipid-binding protein AIR1B (AIR1B).